The sequence spans 386 residues: L-lactate dehydrogenase (386 aa).

Residues 1-380 (MIISAASDYR…SGDALSRVTR (380 aa)) enclose the FMN hydroxy acid dehydrogenase domain. Position 24 (tyrosine 24) interacts with substrate. FMN contacts are provided by serine 106 and glutamine 127. Tyrosine 129 lines the substrate pocket. Threonine 155 contacts FMN. Arginine 164 is a substrate binding site. Lysine 251 provides a ligand contact to FMN. Histidine 275 (proton acceptor) is an active-site residue. Residue arginine 278 participates in substrate binding. 306–330 (DSGIRSGLDVVRMLALGADAVLLGR) lines the FMN pocket.

It belongs to the FMN-dependent alpha-hydroxy acid dehydrogenase family. FMN is required as a cofactor.

It is found in the cell inner membrane. The catalysed reaction is (S)-lactate + A = pyruvate + AH2. In terms of biological role, catalyzes the conversion of L-lactate to pyruvate. Is coupled to the respiratory chain. In Xanthomonas campestris pv. campestris (strain B100), this protein is L-lactate dehydrogenase.